The following is a 183-amino-acid chain: Large ribosomal subunit protein bL25 (183 aa).

Belongs to the bacterial ribosomal protein bL25 family. CTC subfamily. In terms of assembly, part of the 50S ribosomal subunit; part of the 5S rRNA/L5/L18/L25 subcomplex. Contacts the 5S rRNA. Binds to the 5S rRNA independently of L5 and L18.

In terms of biological role, this is one of the proteins that binds to the 5S RNA in the ribosome where it forms part of the central protuberance. In Desulfotalea psychrophila (strain LSv54 / DSM 12343), this protein is Large ribosomal subunit protein bL25.